The following is a 644-amino-acid chain: Biosynthetic arginine decarboxylase (644 aa).

An N6-(pyridoxal phosphate)lysine modification is found at K113. Substrate is bound at residue 293 to 303 (FDVGGGLGVDY).

This sequence belongs to the Orn/Lys/Arg decarboxylase class-II family. SpeA subfamily. It depends on Mg(2+) as a cofactor. Pyridoxal 5'-phosphate is required as a cofactor.

It catalyses the reaction L-arginine + H(+) = agmatine + CO2. In terms of biological role, catalyzes the biosynthesis of agmatine from arginine. The protein is Biosynthetic arginine decarboxylase of Pasteurella multocida (strain Pm70).